The chain runs to 298 residues: Acetyl-coenzyme A carboxylase carboxyl transferase subunit beta (298 aa).

The region spanning 41 to 298 is the CoA carboxyltransferase N-terminal domain; that stretch reads PTIECPECHA…RIVSKLMNLP (258 aa). Zn(2+) is bound by residues Cys45, Cys48, Cys64, and Cys67. The C4-type zinc-finger motif lies at 45–67; sequence CPECHALVTRTAIAFNAYVCPSC.

The protein belongs to the AccD/PCCB family. As to quaternary structure, acetyl-CoA carboxylase is a heterohexamer composed of biotin carboxyl carrier protein (AccB), biotin carboxylase (AccC) and two subunits each of ACCase subunit alpha (AccA) and ACCase subunit beta (AccD). Requires Zn(2+) as cofactor.

The protein resides in the cytoplasm. The enzyme catalyses N(6)-carboxybiotinyl-L-lysyl-[protein] + acetyl-CoA = N(6)-biotinyl-L-lysyl-[protein] + malonyl-CoA. It participates in lipid metabolism; malonyl-CoA biosynthesis; malonyl-CoA from acetyl-CoA: step 1/1. Component of the acetyl coenzyme A carboxylase (ACC) complex. Biotin carboxylase (BC) catalyzes the carboxylation of biotin on its carrier protein (BCCP) and then the CO(2) group is transferred by the transcarboxylase to acetyl-CoA to form malonyl-CoA. This chain is Acetyl-coenzyme A carboxylase carboxyl transferase subunit beta, found in Acinetobacter baylyi (strain ATCC 33305 / BD413 / ADP1).